We begin with the raw amino-acid sequence, 109 residues long: MSRLNIFLLIIVMGCALSVVNSTNQQRQIFIQLQRAQSQEHQLQQDYAQLQYQQSALSKTSRIEQLATSSLKMQPITTGRTQYLTLSPGAAKAVDVPLPASAAPTGGAR.

The Cytoplasmic portion of the chain corresponds to 1–3 (MSR). Residues 4-21 (LNIFLLIIVMGCALSVVN) traverse the membrane as a helical segment. Residues 22 to 109 (STNQQRQIFI…ASAAPTGGAR (88 aa)) are Periplasmic-facing.

It belongs to the FtsL family. As to quaternary structure, part of a complex composed of FtsB, FtsL and FtsQ.

The protein resides in the cell inner membrane. Functionally, essential cell division protein. May link together the upstream cell division proteins, which are predominantly cytoplasmic, with the downstream cell division proteins, which are predominantly periplasmic. The sequence is that of Cell division protein FtsL from Burkholderia pseudomallei (strain K96243).